Here is a 200-residue protein sequence, read N- to C-terminus: MIVSFLYFSSLFPTSLRKINLVAGEKHKDRRMKPSLMDSLLGLLRIRIKRGVNLAVRDLNSSDPYVVVKMAKQKLKTRVIYKNVNPEWNEDLTLSVSDPNLTVLLTVYDYDTFTKDDKMGDAEFGIKPFVNALKMHLHDLPSGTIVTTVQPSRDNCLAEESRVIWSDGKLVQDIVLRLRHVECGEVEAQLQWIDLPGKGL.

The C2 domain occupies 22–142; sequence VAGEKHKDRR…LKMHLHDLPS (121 aa). The Ca(2+) site is built by arginine 57, aspartate 58, aspartate 63, aspartate 109, tyrosine 110, aspartate 111, and aspartate 117.

This sequence belongs to the plant CAR protein family. Binds to PYR/PYL/RCAR abscisic acid intracellular receptors in an ABA-independent manner, both at the plasma membrane and in the nucleus.

The protein resides in the cell membrane. Its subcellular location is the nucleus. Functionally, stimulates the GTPase/ATPase activities of Obg-like ATPases. Mediates the transient calcium-dependent interaction of PYR/PYL/RCAR abscisic acid (ABA) receptors with the plasma membrane and thus regulates ABA sensitivity. The polypeptide is Protein C2-DOMAIN ABA-RELATED 5 (Arabidopsis thaliana (Mouse-ear cress)).